The chain runs to 503 residues: Probable cytosol aminopeptidase (503 aa).

Mn(2+) contacts are provided by K274 and D279. K286 is an active-site residue. Mn(2+) is bound by residues D297, D356, and E358. Residue R360 is part of the active site.

It belongs to the peptidase M17 family. It depends on Mn(2+) as a cofactor.

Its subcellular location is the cytoplasm. It catalyses the reaction Release of an N-terminal amino acid, Xaa-|-Yaa-, in which Xaa is preferably Leu, but may be other amino acids including Pro although not Arg or Lys, and Yaa may be Pro. Amino acid amides and methyl esters are also readily hydrolyzed, but rates on arylamides are exceedingly low.. The catalysed reaction is Release of an N-terminal amino acid, preferentially leucine, but not glutamic or aspartic acids.. Functionally, presumably involved in the processing and regular turnover of intracellular proteins. Catalyzes the removal of unsubstituted N-terminal amino acids from various peptides. The sequence is that of Probable cytosol aminopeptidase from Burkholderia pseudomallei (strain 1710b).